A 444-amino-acid polypeptide reads, in one-letter code: Sonic hedgehog protein (444 aa).

Positions 1 to 24 are cleaved as a signal peptide; sequence MLVATQSLLLLSFICTLVTPPGLA. Residue cysteine 25 is the site of N-palmitoyl cysteine attachment. Residues 33–39 carry the Cardin-Weintraub motif; the sequence is KRRHPKK. Residues glutamate 90, glutamate 91, aspartate 96, threonine 126, glutamate 127, aspartate 130, and aspartate 132 each contribute to the Ca(2+) site. Zn(2+) contacts are provided by histidine 141, aspartate 148, and histidine 183. A lipid anchor (Cholesterol glycine ester) is attached at glycine 198. A run of 3 repeats spans residues 386-393, 394-401, and 403-409. Positions 386–409 are 3 X 8 AA tandem repeats of Q-V-D-L-Q-S-H-H; it reads QVDLQSHHQVDLQSHHQVDLQSHH.

The protein belongs to the hedgehog family. Interacts with HHATL/GUP1 which negatively regulates HHAT-mediated palmitoylation of the SHH N-terminus. Interacts with BOC and CDON. Interacts with HHIP. Interacts with DISP1 via its cholesterol anchor. Interacts with SCUBE2. In terms of assembly, multimer. The C-terminal domain displays an autoproteolysis activity and a cholesterol transferase activity. Both activities result in the cleavage of the full-length protein and covalent attachment of a cholesterol moiety to the C-terminal of the newly generated N-terminal fragment (ShhN). Cholesterylation is required for the sonic hedgehog protein N-product targeting to lipid rafts and multimerization. ShhN is the active species in both local and long-range signaling, whereas the C-product (ShhC) is degraded in the reticulum endoplasmic. Post-translationally, N-palmitoylation by HHAT of ShhN is required for sonic hedgehog protein N-product multimerization and full activity. It is a prerequisite for the membrane-proximal positioning and the subsequent shedding of this N-terminal peptide. In terms of processing, the lipidated N- and C-terminal peptides of ShhNp can be cleaved (shedding). The N-terminal palmitoylated peptide is cleaved at the Cardin-Weintraub (CW) motif site. The cleavage reduced the interactions with heparan sulfate. The cleavage is enhanced by SCUBE2. Strongly expressed in notochord and neural floor plate during embryogenesis. In tadpole, high expression is observed in pancreas/stomach, moderate expression in tail, and low expression in intestine, brain, and hind limb.

It is found in the endoplasmic reticulum membrane. The protein localises to the golgi apparatus membrane. It localises to the cell membrane. It catalyses the reaction glycyl-L-cysteinyl-[protein] + cholesterol + H(+) = [protein]-C-terminal glycyl cholesterol ester + N-terminal L-cysteinyl-[protein]. The C-terminal part of the sonic hedgehog protein precursor displays an autoproteolysis and a cholesterol transferase activity. Both activities result in the cleavage of the full-length protein into two parts (ShhN and ShhC) followed by the covalent attachment of a cholesterol moiety to the C-terminal of the newly generated ShhN. Both activities occur in the endoplasmic reticulum. Once cleaved, ShhC is degraded in the endoplasmic reticulum. Its function is as follows. The dually lipidated sonic hedgehog protein N-product (ShhNp) is a morphogen which is essential for a variety of patterning events during development. Induces ventral cell fate in the neural tube and somites. Involved in the patterning of the anterior-posterior axis of the developing limb bud. Essential for axon guidance. Binds to the patched (PTCH1) receptor, which functions in association with smoothened (SMO), to activate the transcription of target genes. In the absence of SHH, PTCH1 represses the constitutive signaling activity of SMO. The chain is Sonic hedgehog protein from Xenopus laevis (African clawed frog).